A 94-amino-acid polypeptide reads, in one-letter code: MGRSTKKGPFIDNNLLEKVQKMNTSSEKKPIKTWARACTIVPEFIGHTFMVHNGKKFLPVYITERMVGHKLGEFSFTRVFKTHGGMTKESTALK.

This sequence belongs to the universal ribosomal protein uS19 family.

Its function is as follows. Protein S19 forms a complex with S13 that binds strongly to the 16S ribosomal RNA. The protein is Small ribosomal subunit protein uS19 of Elusimicrobium minutum (strain Pei191).